A 404-amino-acid chain; its full sequence is MHAWPDPSVPAVAGTPVPLKLFDTADQRVKEVDTTPDANGEVGMYVCGITPYDSTHLGHAATYLTFDLAQRQLLANGHKVHYVQNITDVDDPLFERAERDGVDWRELGTSQINLFRSDMEILSVIPPCDYIGAMESVDEVIAMVQQLLDAGAAYELDQGDIYASIDATEQFGYESNLDRATMEEYFAERGGDPDREGKRDPLDALVWRGHREGEPAWDSPFGPGRPGWHVECSAIATNRLGSHFAIQGGGSDLAFPHHEFSAAHAEAALKVERMAGHYVHAGMIALDGVKMSKSLGNLVFVHKLSEAGHDPSAIRLAVFAGHYREDRDFSDAILAEAEERLTRWREQLAGEVSEAEATEVVDKLRAILADDLNTPEALSLLDGAAGDCNQIIATALDGLLGVRI.

Residue Cys47 participates in Zn(2+) binding. L-cysteinyl-5'-AMP contacts are provided by residues 47–50 (CGIT), Thr62, and 85–87 (NIT). The short motif at 49-59 (ITPYDSTHLGH) is the 'HIGH' region element. The 'ERGGDP' region signature appears at 188–193 (ERGGDP). Trp228 is a binding site for L-cysteinyl-5'-AMP. Cys232 provides a ligand contact to Zn(2+). 250–252 (GSD) is an L-cysteinyl-5'-AMP binding site. His257 serves as a coordination point for Zn(2+). Ile284 serves as a coordination point for L-cysteinyl-5'-AMP. The short motif at 290–294 (KMSKS) is the 'KMSKS' region element.

The protein belongs to the class-I aminoacyl-tRNA synthetase family. MshC subfamily. In terms of assembly, monomer. Zn(2+) is required as a cofactor.

The catalysed reaction is 1D-myo-inositol 2-amino-2-deoxy-alpha-D-glucopyranoside + L-cysteine + ATP = 1D-myo-inositol 2-(L-cysteinylamino)-2-deoxy-alpha-D-glucopyranoside + AMP + diphosphate + H(+). In terms of biological role, catalyzes the ATP-dependent condensation of GlcN-Ins and L-cysteine to form L-Cys-GlcN-Ins. This Corynebacterium striatum protein is L-cysteine:1D-myo-inositol 2-amino-2-deoxy-alpha-D-glucopyranoside ligase.